We begin with the raw amino-acid sequence, 1137 residues long: MINRDNKKAITKKGMISNRLNKFSIRKYTVGTASILVGTTLIFGLGNQEAKAAENTSTENAKQDEASASDNKEVVSETENNSTQKNDLTNPIKKETNTDSHQEAKEAPTTSSTQQQQNNATTSTETKPQNIEKENVKPSTDKTATEDTSVILEEKKAPNNTNNDVTTKPSTSEIQTTPTTPQESTNIENSQPQPTPSKVDNQVTDATNPKEPVNVSKEELKNNPEKLKELVRNDSNTDRSTKPVATAPTSVAPKRVNAKIRFAVAQPAAVASNNVNDLITVTKQMITEGIKDDGVIQAHDGEHIIYTSDFKIDNAVKAGDTMTVKYDKHTIPSDITDDFTPVDITDPSGEVIAKGTFDLNTKTITYKFTDYVDRYENVNAKLELNSYIDKKEVPNETNLNLTFATADKETSKNVKVEYQKPIVKDESNIQSIFSHLDTTKHEVEQTIYVNPLKLNAKNTNVTIKSGGVADNGDYYTGDGSTIIDSNTEIKVYKVASGQQLPQSNKIYDYSQYEDVTNSVTINKNYGTNMANINFGDIDSAYIVKVVSKYTPGAEDDLAVQQGVRMTTTNKYNYSSYAGYTNTILSTTDSGGGDGTVKPEEKLYKIGDYVWEDVDKDGVQGTDSKEKPMANVLVTLTYPDGTTKSVRTDANGHYEFGGLKDGETYTVKFETPAGYLPTKENGTTDGEKDSNGSSVTVKINGKDDMSLDTGFYKEPKYNLGDYVWEDTNKDGIQDANEPGIKDVKVTLKDSTGKVIGTTTTDASGKYKFTDLDNGNYTVEFETPAGYTPTVKNTTAEDKDSNGLTTTGVIKDADNWTLDSGFYKTPKYSLGDYVWYDSNKDGKQDSTEKGIKDVTVTLQNEKGEVIGTTKTDENGKYHFDNLDSGKYKVIFEKPAGLTQTGTNTTEDDKDADGGEVDVTITDHDDFTLDNGYFEEDTSDSDSDSDSDSDSDSDSDSDSDSDSDSDSDSDSDSDSDSDSDSDSDSDSDSDSDSDSDSDSDSDSDSDSDSDSDSDSDSDSDSDSDSDSDSDSDSDSDSDSDSDSDSDSDSDSDSDSDSDSDSDSDSDSDSDSDSDSDSDSDAGKHTPVKPMSATKDHHNKAKALPETGSENNGSNNATLFGGLFAALGSLLLFGRRKKQNK.

Positions M1–A52 are cleaved as a signal peptide. Residues A53 to K601 form a ligand binding A region region. Disordered stretches follow at residues E54–T249 and L675–K697. The segment covering A61–V75 has biased composition (basic and acidic residues). Polar residues predominate over residues E77–T89. The span at I92–E106 shows a compositional bias: basic and acidic residues. A compositionally biased stretch (low complexity) spans T109–T126. Basic and acidic residues predominate over residues N130–T145. Positions P158 to T207 are enriched in polar residues. A compositionally biased stretch (basic and acidic residues) spans S216–T241. 3 consecutive CNA-B domains span residues L602–P714, K715–P824, and K825–T935. The segment at T896 to N1112 is disordered. Acidic residues-rich tracts occupy residues T903–E913 and Y930–S1076. The short motif at L1100–G1104 is the LPXTG sorting signal element. At T1103 the chain carries Pentaglycyl murein peptidoglycan amidated threonine. A propeptide spans G1104–K1137 (removed by sortase).

It belongs to the serine-aspartate repeat-containing protein (SDr) family.

It is found in the secreted. The protein localises to the cell wall. In terms of biological role, specifically interacts with bone sialoprotein (BSP), a glycoprotein of bone and dentin extracellular matrix. Could contribute to staphylococcal osteomyelitis and arthritis. This chain is Bone sialoprotein-binding protein (bbp), found in Staphylococcus aureus (strain MRSA252).